Consider the following 354-residue polypeptide: Ribosomal RNA large subunit methyltransferase M (354 aa).

Residues serine 183, 216-219, aspartate 235, aspartate 255, and aspartate 271 each bind S-adenosyl-L-methionine; that span reads SPGG. The Proton acceptor role is filled by lysine 300.

The protein belongs to the class I-like SAM-binding methyltransferase superfamily. RNA methyltransferase RlmE family. RlmM subfamily. As to quaternary structure, monomer.

Its subcellular location is the cytoplasm. The catalysed reaction is cytidine(2498) in 23S rRNA + S-adenosyl-L-methionine = 2'-O-methylcytidine(2498) in 23S rRNA + S-adenosyl-L-homocysteine + H(+). Its function is as follows. Catalyzes the 2'-O-methylation at nucleotide C2498 in 23S rRNA. This is Ribosomal RNA large subunit methyltransferase M from Pseudomonas entomophila (strain L48).